A 572-amino-acid chain; its full sequence is MSGPRPVRAPRGTEPSALGWQQEAALRMLQNNLDPEVAEHPDKLVVYGGTGKAARDWRSFDAMVRTLRTLKQDETMLVQSGRPVGVMQTHEWAPRVLIANSNLVGDWANWEEFRRLEALGLTMYGQMTAGSWIYIGTQGILQGTYETFAAVAAKKFGGTLAGTITLTAGLGGMGGAQPLAVTMNDGVVICVDCDPRAIDRRIEHHYLDVKADSLDHALQLATEARDRRKPLSIGVLGNAAELVPQLLAMGAPIDIVTDQTSAHDPLAYLPTGIAFEDMADAAAKDPAGFTTRARESMARHVEAMVGFQDAGAEVFDYGNSIRGEAQLAGYDRAFAFPGFVPAYIRPLFCEGKGPFRWAALSGDPADIAKTDKAILDLFPENESLARWIKMAGERVHFQGLPARICWLGYGERDKAGERFNDMVASGELAAPIVIGRDHLDCGSVASPYRETEAMLDGSDAIADWPLLNAMVNVASGASWVSLHHGGGVGMGRSIHAGQVTVADGTPLAGEKIRRVLTNDPGMGVIRHVDAGYDIAESVAAERDVRVPMREGDEAHEGDAAHGSGAAREGDGV.

NAD(+) contacts are provided by residues 48 to 49 (GG), Q126, 172 to 174 (GMG), D192, 238 to 239 (NA), 259 to 263 (QTSAH), 268 to 269 (YL), and Y317. C405 is an active-site residue. NAD(+) is bound at residue G487. Over residues 550-559 (EGDEAHEGDA) the composition is skewed to basic and acidic residues. Residues 550 to 572 (EGDEAHEGDAAHGSGAAREGDGV) form a disordered region.

Belongs to the urocanase family. NAD(+) serves as cofactor.

It localises to the cytoplasm. The enzyme catalyses 4-imidazolone-5-propanoate = trans-urocanate + H2O. It participates in amino-acid degradation; L-histidine degradation into L-glutamate; N-formimidoyl-L-glutamate from L-histidine: step 2/3. Its function is as follows. Catalyzes the conversion of urocanate to 4-imidazolone-5-propionate. This Streptomyces coelicolor (strain ATCC BAA-471 / A3(2) / M145) protein is Urocanate hydratase.